The primary structure comprises 236 residues: Biosynthetic peptidoglycan transglycosylase (236 aa).

Residues 12–31 (ALLWFVAGSIVLVLVFRWVP) traverse the membrane as a helical segment.

It belongs to the glycosyltransferase 51 family.

Its subcellular location is the cell inner membrane. It catalyses the reaction [GlcNAc-(1-&gt;4)-Mur2Ac(oyl-L-Ala-gamma-D-Glu-L-Lys-D-Ala-D-Ala)](n)-di-trans,octa-cis-undecaprenyl diphosphate + beta-D-GlcNAc-(1-&gt;4)-Mur2Ac(oyl-L-Ala-gamma-D-Glu-L-Lys-D-Ala-D-Ala)-di-trans,octa-cis-undecaprenyl diphosphate = [GlcNAc-(1-&gt;4)-Mur2Ac(oyl-L-Ala-gamma-D-Glu-L-Lys-D-Ala-D-Ala)](n+1)-di-trans,octa-cis-undecaprenyl diphosphate + di-trans,octa-cis-undecaprenyl diphosphate + H(+). It functions in the pathway cell wall biogenesis; peptidoglycan biosynthesis. In terms of biological role, peptidoglycan polymerase that catalyzes glycan chain elongation from lipid-linked precursors. In Pseudomonas putida (strain ATCC 700007 / DSM 6899 / JCM 31910 / BCRC 17059 / LMG 24140 / F1), this protein is Biosynthetic peptidoglycan transglycosylase.